The primary structure comprises 157 residues: Endoribonuclease YbeY (157 aa).

3 residues coordinate Zn(2+): H118, H122, and H128.

It belongs to the endoribonuclease YbeY family. Zn(2+) is required as a cofactor.

Its subcellular location is the cytoplasm. In terms of biological role, single strand-specific metallo-endoribonuclease involved in late-stage 70S ribosome quality control and in maturation of the 3' terminus of the 16S rRNA. The chain is Endoribonuclease YbeY from Bordetella parapertussis (strain 12822 / ATCC BAA-587 / NCTC 13253).